Consider the following 421-residue polypeptide: Gamma-glutamyl phosphate reductase (421 aa).

This sequence belongs to the gamma-glutamyl phosphate reductase family.

It localises to the cytoplasm. The catalysed reaction is L-glutamate 5-semialdehyde + phosphate + NADP(+) = L-glutamyl 5-phosphate + NADPH + H(+). It functions in the pathway amino-acid biosynthesis; L-proline biosynthesis; L-glutamate 5-semialdehyde from L-glutamate: step 2/2. In terms of biological role, catalyzes the NADPH-dependent reduction of L-glutamate 5-phosphate into L-glutamate 5-semialdehyde and phosphate. The product spontaneously undergoes cyclization to form 1-pyrroline-5-carboxylate. This chain is Gamma-glutamyl phosphate reductase, found in Ruegeria sp. (strain TM1040) (Silicibacter sp.).